The chain runs to 411 residues: Phosphoglycerate kinase (411 aa).

The disordered stretch occupies residues 1–24 (MTGLCPLHQPSPLDHPHSGGTPMQ). Residues 41–43 (DYN), Arg56, 79–82 (HFGR), Arg139, and Arg172 contribute to the substrate site. ATP contacts are provided by residues Lys222, Gly310, Glu341, and 369–372 (GGDS).

The protein belongs to the phosphoglycerate kinase family. Monomer.

The protein localises to the cytoplasm. It carries out the reaction (2R)-3-phosphoglycerate + ATP = (2R)-3-phospho-glyceroyl phosphate + ADP. It participates in carbohydrate degradation; glycolysis; pyruvate from D-glyceraldehyde 3-phosphate: step 2/5. This is Phosphoglycerate kinase from Deinococcus radiodurans (strain ATCC 13939 / DSM 20539 / JCM 16871 / CCUG 27074 / LMG 4051 / NBRC 15346 / NCIMB 9279 / VKM B-1422 / R1).